Consider the following 106-residue polypeptide: Putative membrane protein insertion efficiency factor (106 aa).

Belongs to the UPF0161 family.

It is found in the cell inner membrane. Its function is as follows. Could be involved in insertion of integral membrane proteins into the membrane. This is Putative membrane protein insertion efficiency factor from Acinetobacter baumannii (strain SDF).